The sequence spans 455 residues: GTPase Der (455 aa).

EngA-type G domains follow at residues 4–169 (PVVA…PPKD) and 178–353 (IQLS…EQHR). GTP-binding positions include 10–17 (GRPNVGKS), 57–61 (DTGGL), 120–123 (NKCE), 184–191 (GRPNVGKS), 231–235 (DTAGI), and 296–299 (NKWD). Residues 354 to 439 (RRVSTSVVNE…PVKLFWRGKQ (86 aa)) form the KH-like domain.

It belongs to the TRAFAC class TrmE-Era-EngA-EngB-Septin-like GTPase superfamily. EngA (Der) GTPase family. Associates with the 50S ribosomal subunit.

Its function is as follows. GTPase that plays an essential role in the late steps of ribosome biogenesis. The protein is GTPase Der of Synechococcus sp. (strain CC9311).